Reading from the N-terminus, the 85-residue chain is Turmerin (85 aa).

Post-translationally, the N-terminus is blocked.

Inhibition of trypsin. Has anticarcinogenic activity, prevents transformation of DMBA-treated JB6 cells. Has antipromoter activity, prevents promotion by tetradecanoyl phorbal acetate (TPA) in JB6 cells. Prevents tertiary butyl hydroperoxide-induced mutagenesis. Protects AT base pairs and shows antimutagenesis activity in TA102 and TA104 S.typhimurium mutagenesis tests. Inhibits paw edema formation induced by phospholipase A2 in Swiss Wistar mice. Prevents the release of arachidonate, the parent compound for the synthesis of prostaglandins and prostacyclins. Has antimalarial activity, kills P.falciparum. Has antivenom activity, nullifies the lethal effects of N.naja venom and inhibits phospholipase A2 present in N.naja venom. Has antifungal activity, inhibits cilia formation by A.niger. Is not toxic or allergenic. In Curcuma longa (Turmeric), this protein is Turmerin.